The primary structure comprises 364 residues: MIRAFDAFSLPLLRLLDAEDAHRLAIQGLRLLPQVKPRPDDSKLAVRAFGLNFPNPVGIAAGFDKNAEAPDALLRLGFGFVEIGTVTPKPQAGNPRPRLFRLERDEAIINRMGFNNDGAEAVLRRLAARAQQGGIVGVNVGANKDSTDRVADYVSLIETFAPVASYFTVNVSSPNTPGLRNLQQAAALDDLLARVIEARERVRASAGDTPVLLKIAPDLTLSELDDVVHIARSRRVDGMIVANTTLSRSPMLRERTRLNEQGGLSGRPLFRLSTRMVAETYVRAEGAFPLIGVGGIDSGGAALTKIRAGASLVQLYSALIYKGLGLVDSIKADLASTLLRTGRDSLSEIVGADAPTITAEEWPV.

Residues 61–65 (AGFDK) and threonine 85 each bind FMN. Lysine 65 serves as a coordination point for substrate. 110–114 (NRMGF) is a substrate binding site. Asparagine 139 and asparagine 170 together coordinate FMN. Asparagine 170 serves as a coordination point for substrate. Serine 173 acts as the Nucleophile in catalysis. Residue asparagine 175 coordinates substrate. Residues lysine 214 and alanine 242 each coordinate FMN. 243-244 (NT) is a binding site for substrate. FMN contacts are provided by residues glycine 266, glycine 295, and 316 to 317 (YS).

Belongs to the dihydroorotate dehydrogenase family. Type 2 subfamily. Monomer. It depends on FMN as a cofactor.

It localises to the cell membrane. It carries out the reaction (S)-dihydroorotate + a quinone = orotate + a quinol. It functions in the pathway pyrimidine metabolism; UMP biosynthesis via de novo pathway; orotate from (S)-dihydroorotate (quinone route): step 1/1. Its function is as follows. Catalyzes the conversion of dihydroorotate to orotate with quinone as electron acceptor. This is Dihydroorotate dehydrogenase (quinone) from Rhodopseudomonas palustris (strain HaA2).